We begin with the raw amino-acid sequence, 177 residues long: Large ribosomal subunit protein uL6 (177 aa).

Belongs to the universal ribosomal protein uL6 family. Part of the 50S ribosomal subunit.

Functionally, this protein binds to the 23S rRNA, and is important in its secondary structure. It is located near the subunit interface in the base of the L7/L12 stalk, and near the tRNA binding site of the peptidyltransferase center. In Rickettsia prowazekii (strain Madrid E), this protein is Large ribosomal subunit protein uL6.